The sequence spans 306 residues: D-alanine--D-alanine ligase (306 aa).

Positions 101–300 (RIMLAAAGVP…FGELVTWMVE (200 aa)) constitute an ATP-grasp domain. Residue 128–182 (MPTPYVLKPNAGGSSVGVFIVREDQAHPPQELTREDWPHGENLLAEEFIPGLELT) coordinates ATP. Mg(2+) is bound by residues Asp-250, Glu-267, and Asn-269.

Belongs to the D-alanine--D-alanine ligase family. Mg(2+) is required as a cofactor. Requires Mn(2+) as cofactor.

The protein resides in the cytoplasm. It catalyses the reaction 2 D-alanine + ATP = D-alanyl-D-alanine + ADP + phosphate + H(+). Its pathway is cell wall biogenesis; peptidoglycan biosynthesis. In terms of biological role, cell wall formation. The protein is D-alanine--D-alanine ligase of Xanthobacter autotrophicus (strain ATCC BAA-1158 / Py2).